We begin with the raw amino-acid sequence, 466 residues long: Methylenetetrahydrofolate--tRNA-(uracil-5-)-methyltransferase TrmFO (466 aa).

FAD is bound at residue 14-19; that stretch reads GGGLAG.

The protein belongs to the MnmG family. TrmFO subfamily. FAD serves as cofactor.

The protein resides in the cytoplasm. It catalyses the reaction uridine(54) in tRNA + (6R)-5,10-methylene-5,6,7,8-tetrahydrofolate + NADH + H(+) = 5-methyluridine(54) in tRNA + (6S)-5,6,7,8-tetrahydrofolate + NAD(+). It carries out the reaction uridine(54) in tRNA + (6R)-5,10-methylene-5,6,7,8-tetrahydrofolate + NADPH + H(+) = 5-methyluridine(54) in tRNA + (6S)-5,6,7,8-tetrahydrofolate + NADP(+). In terms of biological role, catalyzes the folate-dependent formation of 5-methyl-uridine at position 54 (M-5-U54) in all tRNAs. The polypeptide is Methylenetetrahydrofolate--tRNA-(uracil-5-)-methyltransferase TrmFO (Brucella melitensis biotype 1 (strain ATCC 23456 / CCUG 17765 / NCTC 10094 / 16M)).